The chain runs to 218 residues: Kynurenine formamidase (218 aa).

Trp27 lines the substrate pocket. The Zn(2+) site is built by His57, His61, and Asp63. Residue His67 is the Proton donor/acceptor of the active site. Zn(2+) contacts are provided by His169 and Glu181.

This sequence belongs to the Cyclase 1 superfamily. KynB family. In terms of assembly, homodimer. It depends on Zn(2+) as a cofactor.

It carries out the reaction N-formyl-L-kynurenine + H2O = L-kynurenine + formate + H(+). The protein operates within amino-acid degradation; L-tryptophan degradation via kynurenine pathway; L-kynurenine from L-tryptophan: step 2/2. Its activity is regulated as follows. Inhibited by EDTA. Insensitive to phenylmethylsulfonyl fluoride (PMSF). Catalyzes the hydrolysis of N-formyl-L-kynurenine to L-kynurenine, the second step in the kynurenine pathway of tryptophan degradation. This Cupriavidus metallidurans (strain ATCC 43123 / DSM 2839 / NBRC 102507 / CH34) (Ralstonia metallidurans) protein is Kynurenine formamidase.